A 361-amino-acid polypeptide reads, in one-letter code: Peptide chain release factor 1 (361 aa).

N5-methylglutamine is present on Q235.

Belongs to the prokaryotic/mitochondrial release factor family. Methylated by PrmC. Methylation increases the termination efficiency of RF1.

The protein resides in the cytoplasm. Its function is as follows. Peptide chain release factor 1 directs the termination of translation in response to the peptide chain termination codons UAG and UAA. The polypeptide is Peptide chain release factor 1 (Chlamydia abortus (strain DSM 27085 / S26/3) (Chlamydophila abortus)).